The sequence spans 344 residues: Putative [LysW]-lysine/[LysW]-ornithine hydrolase (344 aa).

Histidine 66 provides a ligand contact to Zn(2+). Aspartate 68 is an active-site residue. Aspartate 90 is a binding site for Zn(2+). Residue glutamate 117 is the Proton acceptor of the active site. Zn(2+) contacts are provided by glutamate 118, glutamate 139, and histidine 297.

Belongs to the peptidase M20A family. LysK subfamily. Zn(2+) is required as a cofactor. The cofactor is Co(2+).

Its subcellular location is the cytoplasm. The catalysed reaction is [amino-group carrier protein]-C-terminal-gamma-(L-lysyl)-L-glutamate + H2O = [amino-group carrier protein]-C-terminal-L-glutamate + L-lysine. It catalyses the reaction [amino-group carrier protein]-C-terminal-gamma-(L-ornithyl)-L-glutamate + H2O = [amino-group carrier protein]-C-terminal-L-glutamate + L-ornithine. It participates in amino-acid biosynthesis; L-lysine biosynthesis via AAA pathway; L-lysine from L-alpha-aminoadipate (Thermus route): step 5/5. It functions in the pathway amino-acid biosynthesis; L-arginine biosynthesis. Functionally, catalyzes the release of L-lysine from [LysW]-gamma-L-lysine and the release of L-ornithine from [LysW]-L-ornithine. The protein is Putative [LysW]-lysine/[LysW]-ornithine hydrolase of Thermococcus kodakarensis (strain ATCC BAA-918 / JCM 12380 / KOD1) (Pyrococcus kodakaraensis (strain KOD1)).